The primary structure comprises 157 residues: Phosphopantetheine adenylyltransferase (157 aa).

Substrate is bound at residue T8. ATP contacts are provided by residues 8 to 9 and H16; that span reads TF. The substrate site is built by K40, T72, and R86. ATP-binding positions include 87–89, E97, and 122–128; these read GLR and YSFLSSS.

Belongs to the bacterial CoaD family. Homohexamer. It depends on Mg(2+) as a cofactor.

The protein localises to the cytoplasm. The catalysed reaction is (R)-4'-phosphopantetheine + ATP + H(+) = 3'-dephospho-CoA + diphosphate. It functions in the pathway cofactor biosynthesis; coenzyme A biosynthesis; CoA from (R)-pantothenate: step 4/5. Reversibly transfers an adenylyl group from ATP to 4'-phosphopantetheine, yielding dephospho-CoA (dPCoA) and pyrophosphate. This is Phosphopantetheine adenylyltransferase from Prochlorococcus marinus (strain MIT 9301).